An 881-amino-acid polypeptide reads, in one-letter code: Cell wall protein PRY3 (881 aa).

Positions 1–18 are cleaved as a signal peptide; sequence MLEFPISVLLGCLVAVKA. The SCP domain occupies 30-144; it reads LNEHNKFRAL…TWNNYIVCSY (115 aa). Residue asparagine 101 is glycosylated (N-linked (GlcNAc...) asparagine). The segment at 262–313 is disordered; sequence VVSSDATSSTTTTSSVATSSSTTSSDPTSSTAAASSSDPASSSAAASSSAST. A glycan (N-linked (GlcNAc...) asparagine) is linked at asparagine 360. 2 disordered regions span residues 381–400 and 453–494; these read AADD…VSEH and VSST…NSAA. The segment covering 386 to 400 has biased composition (polar residues); sequence QGSTSKEATSSVSEH. N-linked (GlcNAc...) asparagine glycosylation is found at asparagine 488, asparagine 535, asparagine 547, and asparagine 569. The segment at 579–611 is disordered; that stretch reads IDPTLDPTDNSASPTDNAKHTSTYGSSSTGASL. Residues 585–594 are compositionally biased toward polar residues; it reads PTDNSASPTD. A compositionally biased stretch (low complexity) spans 599 to 611; the sequence is TSTYGSSSTGASL. N-linked (GlcNAc...) asparagine glycosylation occurs at asparagine 625. 2 disordered regions span residues 758 to 788 and 800 to 830; these read LASD…TTTT and PSST…MHQP. Composition is skewed to low complexity over residues 776–788 and 808–820; these read STSN…TTTT and RTTT…STTS. The segment covering 821–830 has biased composition (polar residues); sequence QQDGSAMHQP. Residue glycine 853 is the site of GPI-anchor amidated glycine attachment. Residues 854 to 881 constitute a propeptide, removed in mature form; it reads AATPLSIFQCNSLAGTIAAFVVAVLFAF.

Belongs to the CRISP family. In terms of processing, the GPI-anchor is attached to the protein in the endoplasmic reticulum and serves to target the protein to the cell surface. There, the glucosamine-inositol phospholipid moiety is cleaved off and the GPI-modified mannoprotein is covalently attached via its lipidless GPI glycan remnant to the 1,6-beta-glucan of the outer cell wall layer.

It is found in the secreted. It localises to the cell wall. The protein resides in the membrane. In terms of biological role, the full-length isoform (isoform Long) is a daughter cell-specific cell wall protein required for efficient export of lipids such as acetylated sterols. Acts in detoxification of hydrophobic compounds. Involved in tolerance to organic solvents such as dimethyl sulfoxide (DMSO). Also plays a role as an inhibitor of mating. STE12 is utilized as a repressor of full-length PRY3 transcription, ensuring efficient mating. Functionally, there is no evidence that production of the short PRY3 transcript (isoform Short) is anything more than an adventitious by-product of the mechanism responsible for the repression of the full-length transcript. Moreover, no disadvantage is detectable for cells unable to make the short transcript. This chain is Cell wall protein PRY3 (PRY3), found in Saccharomyces cerevisiae (strain ATCC 204508 / S288c) (Baker's yeast).